We begin with the raw amino-acid sequence, 168 residues long: MKRKLKMDNLNINFINDDEHPIPSQDLLLKCLQLVANKHHISHAEVNLNIVSNDEIQQINKQFRNKDKPTNIISFEFEKPQGLPDDIANDFLGDIVIAPAVLENEAKEQNKELNDHWQHIFIHGLLHLLGYDHQDDQEAEVMENLEIQLLAQLGIANPYIEQENQNGR.

Histidine 123, histidine 127, and histidine 133 together coordinate Zn(2+).

This sequence belongs to the endoribonuclease YbeY family. The cofactor is Zn(2+).

The protein resides in the cytoplasm. Single strand-specific metallo-endoribonuclease involved in late-stage 70S ribosome quality control and in maturation of the 3' terminus of the 16S rRNA. The protein is Endoribonuclease YbeY of Francisella tularensis subsp. tularensis (strain SCHU S4 / Schu 4).